The chain runs to 382 residues: Alkanesulfonate monooxygenase (382 aa).

This sequence belongs to the SsuD family.

The enzyme catalyses an alkanesulfonate + FMNH2 + O2 = an aldehyde + FMN + sulfite + H2O + 2 H(+). In terms of biological role, catalyzes the desulfonation of aliphatic sulfonates. The chain is Alkanesulfonate monooxygenase from Pseudomonas putida (strain ATCC 700007 / DSM 6899 / JCM 31910 / BCRC 17059 / LMG 24140 / F1).